A 356-amino-acid chain; its full sequence is Phospho-N-acetylmuramoyl-pentapeptide-transferase (356 aa).

A run of 10 helical transmembrane segments spans residues 25–45 (TVAA…SIIS), 70–90 (GTPT…ALLW), 93–113 (LFNI…AIGF), 138–158 (FLVA…GLAL), 164–184 (YFIN…VGLG), 195–215 (GLAI…AYLS), 232–252 (VGEL…FLWF), 258–278 (AIFM…IVSV), 284–304 (IVLI…IIQV), and 333–353 (QIVV…LSTL).

Belongs to the glycosyltransferase 4 family. MraY subfamily. Mg(2+) is required as a cofactor.

It localises to the cell inner membrane. The catalysed reaction is UDP-N-acetyl-alpha-D-muramoyl-L-alanyl-gamma-D-glutamyl-meso-2,6-diaminopimeloyl-D-alanyl-D-alanine + di-trans,octa-cis-undecaprenyl phosphate = di-trans,octa-cis-undecaprenyl diphospho-N-acetyl-alpha-D-muramoyl-L-alanyl-D-glutamyl-meso-2,6-diaminopimeloyl-D-alanyl-D-alanine + UMP. The protein operates within cell wall biogenesis; peptidoglycan biosynthesis. Catalyzes the initial step of the lipid cycle reactions in the biosynthesis of the cell wall peptidoglycan: transfers peptidoglycan precursor phospho-MurNAc-pentapeptide from UDP-MurNAc-pentapeptide onto the lipid carrier undecaprenyl phosphate, yielding undecaprenyl-pyrophosphoryl-MurNAc-pentapeptide, known as lipid I. The sequence is that of Phospho-N-acetylmuramoyl-pentapeptide-transferase from Bartonella bacilliformis (strain ATCC 35685 / KC583 / Herrer 020/F12,63).